The following is a 202-amino-acid chain: Probable adenylyl-sulfate kinase (202 aa).

Residue 36–43 coordinates ATP; that stretch reads GLSGSGKS. The Phosphoserine intermediate role is filled by S110.

The protein belongs to the APS kinase family.

The catalysed reaction is adenosine 5'-phosphosulfate + ATP = 3'-phosphoadenylyl sulfate + ADP + H(+). Its pathway is sulfur metabolism; hydrogen sulfide biosynthesis; sulfite from sulfate: step 2/3. Catalyzes the synthesis of activated sulfate. The polypeptide is Probable adenylyl-sulfate kinase (Halalkalibacterium halodurans (strain ATCC BAA-125 / DSM 18197 / FERM 7344 / JCM 9153 / C-125) (Bacillus halodurans)).